Here is a 420-residue protein sequence, read N- to C-terminus: Phospholipase A1-II 3 (420 aa).

A signal peptide spans 1–21 (MCCFLLVSVLLATTLTDVASA). Asn-231 carries N-linked (GlcNAc...) asparagine glycosylation. The Acyl-ester intermediate role is filled by Ser-240. Residue Ser-240 is the Charge relay system of the active site. Asn-294 carries N-linked (GlcNAc...) asparagine glycosylation. Residues Asp-305 and His-343 each act as charge relay system in the active site. A coiled-coil region spans residues 367–388 (VVDRDLALVNKEVDALRDEYQV). The N-linked (GlcNAc...) asparagine glycan is linked to Asn-403.

The protein belongs to the AB hydrolase superfamily. Lipase family.

Its subcellular location is the secreted. In terms of biological role, acylhydrolase that catalyzes the hydrolysis of phospholipids at the sn-1 position. The sequence is that of Phospholipase A1-II 3 from Oryza sativa subsp. japonica (Rice).